Reading from the N-terminus, the 579-residue chain is O-fucosyltransferase 24 (579 aa).

Residues 58 to 78 form a helical; Signal-anchor for type II membrane protein membrane-spanning segment; it reads LWAFSLFLLSILGISLRLGLC. Asn-133 carries an N-linked (GlcNAc...) asparagine glycan. 355–357 contacts substrate; it reads HLR. N-linked (GlcNAc...) asparagine glycosylation is found at Asn-528, Asn-573, and Asn-576.

It belongs to the glycosyltransferase GT106 family.

It localises to the membrane. It functions in the pathway glycan metabolism. In Arabidopsis thaliana (Mouse-ear cress), this protein is O-fucosyltransferase 24.